The sequence spans 146 residues: 3-dehydroquinate dehydratase (146 aa).

The active-site Proton acceptor is Tyr23. 3 residues coordinate substrate: Asn74, His80, and Asp87. Residue His100 is the Proton donor of the active site. Substrate contacts are provided by residues 101-102 (IS) and Arg111.

The protein belongs to the type-II 3-dehydroquinase family. As to quaternary structure, homododecamer.

It carries out the reaction 3-dehydroquinate = 3-dehydroshikimate + H2O. It participates in metabolic intermediate biosynthesis; chorismate biosynthesis; chorismate from D-erythrose 4-phosphate and phosphoenolpyruvate: step 3/7. Its function is as follows. Catalyzes a trans-dehydration via an enolate intermediate. The sequence is that of 3-dehydroquinate dehydratase from Bacillus cereus (strain ATCC 10987 / NRS 248).